The following is a 196-amino-acid chain: Probable DNA-directed RNA polymerase subunit delta (196 aa).

The HTH HARE-type domain maps to 14 to 81 (LSMIEVAHEI…GDNVWGLRSW (68 aa)). A compositionally biased stretch (acidic residues) spans 119 to 150 (DDDDVIDYDDDDPEDEDLDNDYDDEDDDDDEG). The interval 119–196 (DDDDVIDYDD…DADLDEENQD (78 aa)) is disordered. Basic and acidic residues predominate over residues 151-161 (SHELKQYTKDL). 2 stretches are compositionally biased toward acidic residues: residues 162-176 (DDIDDGDDPEDELAD) and 186-196 (SDADLDEENQD).

The protein belongs to the RpoE family. As to quaternary structure, RNAP is composed of a core of 2 alpha, a beta and a beta' subunits. The core is associated with a delta subunit and one of several sigma factors.

In terms of biological role, participates in both the initiation and recycling phases of transcription. In the presence of the delta subunit, RNAP displays an increased specificity of transcription, a decreased affinity for nucleic acids, and an increased efficiency of RNA synthesis because of enhanced recycling. This chain is Probable DNA-directed RNA polymerase subunit delta, found in Ligilactobacillus salivarius (strain UCC118) (Lactobacillus salivarius).